The following is a 281-amino-acid chain: Lectin (281 aa).

Residues 1 to 26 (MATYKLCSVLALSLTLFLLILNKVNS) form the signal peptide. 2 N-linked (GlcNAc...) asparagine glycosylation sites follow: Asn-43 and Asn-139. Positions 269 to 281 (AVIPTSNHNTFAI) are excised as a propeptide.

Belongs to the leguminous lectin family. As to quaternary structure, homodimer. A minor C-terminal proteolytic processing site is observed at position 268.

In terms of biological role, galactose and N-acetyllactosamine specific lectin. Binds to the H-2 blood type determinant fucosyl-N-acetyllactosamine. The protein is Lectin of Erythrina corallodendron (Coral tree).